The chain runs to 341 residues: Uroporphyrinogen decarboxylase (341 aa).

Residues 23-27, F42, D73, Y148, S203, and H318 contribute to the substrate site; that span reads RQAGR.

It belongs to the uroporphyrinogen decarboxylase family. As to quaternary structure, homodimer.

It localises to the cytoplasm. It carries out the reaction uroporphyrinogen III + 4 H(+) = coproporphyrinogen III + 4 CO2. It participates in porphyrin-containing compound metabolism; protoporphyrin-IX biosynthesis; coproporphyrinogen-III from 5-aminolevulinate: step 4/4. Its function is as follows. Catalyzes the decarboxylation of four acetate groups of uroporphyrinogen-III to yield coproporphyrinogen-III. The sequence is that of Uroporphyrinogen decarboxylase from Brucella melitensis biotype 1 (strain ATCC 23456 / CCUG 17765 / NCTC 10094 / 16M).